Reading from the N-terminus, the 81-residue chain is Photosystem I iron-sulfur center (81 aa).

4Fe-4S ferredoxin-type domains are found at residues 2–31 (SHSVKIYDTCIGCTQCVRACPTDVLEMIPW) and 39–68 (IASAPRTEDCVGCKRCESACPTDFLSVRVY). [4Fe-4S] cluster is bound by residues cysteine 11, cysteine 14, cysteine 17, cysteine 21, cysteine 48, cysteine 51, cysteine 54, and cysteine 58.

The eukaryotic PSI reaction center is composed of at least 11 subunits. [4Fe-4S] cluster serves as cofactor.

It localises to the plastid. It is found in the chloroplast thylakoid membrane. It catalyses the reaction reduced [plastocyanin] + hnu + oxidized [2Fe-2S]-[ferredoxin] = oxidized [plastocyanin] + reduced [2Fe-2S]-[ferredoxin]. Its function is as follows. Apoprotein for the two 4Fe-4S centers FA and FB of photosystem I (PSI); essential for photochemical activity. FB is the terminal electron acceptor of PSI, donating electrons to ferredoxin. The C-terminus interacts with PsaA/B/D and helps assemble the protein into the PSI complex. Required for binding of PsaD and PsaE to PSI. PSI is a plastocyanin-ferredoxin oxidoreductase, converting photonic excitation into a charge separation, which transfers an electron from the donor P700 chlorophyll pair to the spectroscopically characterized acceptors A0, A1, FX, FA and FB in turn. The protein is Photosystem I iron-sulfur center of Acorus calamus (Sweet flag).